The following is a 164-amino-acid chain: Ubiquitin-fold modifier-conjugating enzyme 1 (164 aa).

The Glycyl thioester intermediate role is filled by Cys116.

The protein belongs to the ubiquitin-conjugating enzyme family. UFC1 subfamily.

E2-like enzyme which forms an intermediate with UFM1 via a thioester linkage. This chain is Ubiquitin-fold modifier-conjugating enzyme 1, found in Drosophila ananassae (Fruit fly).